The primary structure comprises 455 residues: Glutamate--tRNA ligase (455 aa).

The 'HIGH' region motif lies at 8–18 (PSPTGYLHIGG). The 'KMSKS' region motif lies at 231–235 (RLSKR). Position 234 (Lys-234) interacts with ATP.

The protein belongs to the class-I aminoacyl-tRNA synthetase family. Glutamate--tRNA ligase type 1 subfamily. As to quaternary structure, monomer.

It localises to the cytoplasm. It catalyses the reaction tRNA(Glu) + L-glutamate + ATP = L-glutamyl-tRNA(Glu) + AMP + diphosphate. In terms of biological role, catalyzes the attachment of glutamate to tRNA(Glu) in a two-step reaction: glutamate is first activated by ATP to form Glu-AMP and then transferred to the acceptor end of tRNA(Glu). This is Glutamate--tRNA ligase from Vesicomyosocius okutanii subsp. Calyptogena okutanii (strain HA).